A 273-amino-acid polypeptide reads, in one-letter code: Dermonecrotic toxin LdSicTox-alphaIB1av (273 aa).

His-5 is a catalytic residue. Residues Glu-25 and Asp-27 each coordinate Mg(2+). His-41 acts as the Nucleophile in catalysis. 2 disulfide bridges follow: Cys-45–Cys-51 and Cys-47–Cys-190. Asp-85 contributes to the Mg(2+) binding site. The N-linked (GlcNAc...) asparagine glycan is linked to Asn-250.

This sequence belongs to the arthropod phospholipase D family. Class II subfamily. Requires Mg(2+) as cofactor. In terms of tissue distribution, expressed by the venom gland.

Its subcellular location is the secreted. It catalyses the reaction an N-(acyl)-sphingosylphosphocholine = an N-(acyl)-sphingosyl-1,3-cyclic phosphate + choline. It carries out the reaction an N-(acyl)-sphingosylphosphoethanolamine = an N-(acyl)-sphingosyl-1,3-cyclic phosphate + ethanolamine. The enzyme catalyses a 1-acyl-sn-glycero-3-phosphocholine = a 1-acyl-sn-glycero-2,3-cyclic phosphate + choline. The catalysed reaction is a 1-acyl-sn-glycero-3-phosphoethanolamine = a 1-acyl-sn-glycero-2,3-cyclic phosphate + ethanolamine. Dermonecrotic toxins cleave the phosphodiester linkage between the phosphate and headgroup of certain phospholipids (sphingolipid and lysolipid substrates), forming an alcohol (often choline) and a cyclic phosphate. This toxin acts on sphingomyelin (SM). It may also act on ceramide phosphoethanolamine (CPE), lysophosphatidylcholine (LPC) and lysophosphatidylethanolamine (LPE), but not on lysophosphatidylserine (LPS), and lysophosphatidylglycerol (LPG). It acts by transphosphatidylation, releasing exclusively cyclic phosphate products as second products. Induces dermonecrosis, hemolysis, increased vascular permeability, edema, inflammatory response, and platelet aggregation. This chain is Dermonecrotic toxin LdSicTox-alphaIB1av, found in Loxosceles deserta (Desert recluse spider).